Reading from the N-terminus, the 196-residue chain is dITP/XTP pyrophosphatase (196 aa).

7–12 (THNPGK) is a binding site for substrate. 2 residues coordinate Mg(2+): Asp-40 and Asp-69. Asp-69 acts as the Proton acceptor in catalysis. Substrate is bound by residues Ser-70, 150–153 (FGYD), Lys-173, and 178–179 (HR).

Belongs to the HAM1 NTPase family. As to quaternary structure, homodimer. Mg(2+) serves as cofactor.

The catalysed reaction is XTP + H2O = XMP + diphosphate + H(+). It carries out the reaction dITP + H2O = dIMP + diphosphate + H(+). The enzyme catalyses ITP + H2O = IMP + diphosphate + H(+). Its function is as follows. Pyrophosphatase that catalyzes the hydrolysis of nucleoside triphosphates to their monophosphate derivatives, with a high preference for the non-canonical purine nucleotides XTP (xanthosine triphosphate), dITP (deoxyinosine triphosphate) and ITP. Seems to function as a house-cleaning enzyme that removes non-canonical purine nucleotides from the nucleotide pool, thus preventing their incorporation into DNA/RNA and avoiding chromosomal lesions. This is dITP/XTP pyrophosphatase from Exiguobacterium sp. (strain ATCC BAA-1283 / AT1b).